Reading from the N-terminus, the 275-residue chain is tRNA pseudouridine synthase A (275 aa).

Residue Asp-62 is the Nucleophile of the active site. Tyr-124 contacts substrate.

The protein belongs to the tRNA pseudouridine synthase TruA family. Homodimer.

The enzyme catalyses uridine(38/39/40) in tRNA = pseudouridine(38/39/40) in tRNA. In terms of biological role, formation of pseudouridine at positions 38, 39 and 40 in the anticodon stem and loop of transfer RNAs. The chain is tRNA pseudouridine synthase A from Herminiimonas arsenicoxydans.